The primary structure comprises 740 residues: MPTPVESHSLLHSGLTLCGSIISVNQDRRKTSTLGCVIQVGSGFYGLTAAHAVRKSRAYPTLPLNSHTDEGLGAASDGPMTSHVLRNWQNPFMACKNAEAVELDDHSTSEVAVDESVEDVDFVTDVEYEDLREDDDNHGDDSTTSMPNDVFHEDYLTSAPQEGMMETQAMFLSIPELNDKCLVSRRARPNMAHRVTHGDSGSIVIDARTNVVYGHVVASNPLGEIYISPIGATLEQIQSHFPGSKVSLPDPLTILTGLATFGHETIGRKRARYPDKLRNLGLSPDTEYTRLVTPTANKSLDFSNYPKFHYFHQCSEDSSSNRRVNEVEKSQPANLTLDCNTVELGLRQSTWHQADSPVPLSSVKEESGLGKLARSPAEPAPSRPLPGSSIPVVISQSTGRELYSNGVTEATLSSKLSDEAEADTSIKPDSDAASPTDCRIIGHLRTRPVGLERDLSSTYNAALSMDQDPEELLQQDIFPMRVWRSLSTLKQRLPSQERLENLTWRMTHINLRKPKEQEEPKRHRTSNNSIVGSSDIADVGKTSKQKAIQPNIVELDVVTSPENIPLPASLVPISSSEATWQVDKKSVSSVTFGQSSGCFPPSYQGFRPDAPEKGNLPRATTTSYHLPPQPIGWPTCIPSNMKWHSLVNMSTLAADEHEGEGRADTNRHVSTQSNMPTEQSLLPQGDESVPPTCTNCFTLTCDILARNENVDQLAIDAPGHITSAKAVYNLYTFISYLLIF.

Disordered regions lie at residues 353–391 (QADSPVPLSSVKEESGLGKLARSPAEPAPSRPLPGSSIP), 414–434 (SKLSDEAEADTSIKPDSDAAS), 514–535 (PKEQEEPKRHRTSNNSIVGSSD), and 656–686 (EHEGEGRADTNRHVSTQSNMPTEQSLLPQGD). Basic and acidic residues predominate over residues 656–667 (EHEGEGRADTNR). Residues 668–682 (HVSTQSNMPTEQSLL) show a composition bias toward polar residues.

The protein operates within mycotoxin biosynthesis. Functionally, part of the gene cluster that mediates the biosynthesis of gramillins A and B, bicyclic lipopeptides that induce cell death in maize leaves but not in wheat leaves. The nonribosomal peptide synthetase GRA1 incorporates respectively a glutamic adic (Glu), a leucine (Leu), a serine (Ser), a hydroxyglutamine (HOGln), a 2-amino decanoic acid, and 2 cysteins (CysB and CysA). The biosynthesis of 2-amino decanoic acid incorporated in gramillins could be initiated by a fatty acid synthase composed of the alpha and beta subunits FGSG_00036 and FGSG_11656. The cytochrome P450 monooxygenase FGSG_15680 could hydroxylate the fatty acid chain. Subsequent oxidation to the ketone by the oxidoreductase FGSG_00048 and transamination by aminotransferase FGSG_00049 could form 2-amino-decanoic acid. On the other hand, FGSG_15680 could also be responsible for the HO-modified glutamine at the gamma-position. Whether hydroxylation occurs on the fully assembled product or on the Gln residue prior to assembly into the gramillins requires further proof. The thioredoxin FGSG_00043 could also be required for the disulfide-bond formation between CysA and CysB. The specific involvement of the remaining proteins from the cluster is more difficult to discern, but could have broader regulatory (FGSG_00040 and FGSG_11657) or enzymatic functions (FGSG_00044 and FGSG_00045). The final C-domain of GRA1 does not possess the expected sequence of a termination CT domain, often implicated in macrocyclization and release of a cyclopeptidein fungal NRPs; and the thioesterase FGSG_00047 may act in concert with the terminal C-domain of GRA1 to catalyze the formation of the macrocyclic anhydride and release of the products. In Gibberella zeae (strain ATCC MYA-4620 / CBS 123657 / FGSC 9075 / NRRL 31084 / PH-1) (Wheat head blight fungus), this protein is Gramillins biosynthetic cluster protein FGSG_11657.